Here is a 666-residue protein sequence, read N- to C-terminus: Secreted protein ARB_01864 (666 aa).

An N-terminal signal peptide occupies residues 1-18; sequence MRFSTLVSLAAWAAAALA. N-linked (GlcNAc...) asparagine glycosylation is found at Asn-160, Asn-216, Asn-342, Asn-405, Asn-594, Asn-600, and Asn-662. Residues 323-353 form a disordered region; it reads RGSMKPRGVPNPTRRAIKGNATTSTQPYQHP.

The protein localises to the secreted. This is Secreted protein ARB_01864 from Arthroderma benhamiae (strain ATCC MYA-4681 / CBS 112371) (Trichophyton mentagrophytes).